The sequence spans 2531 residues: Putative neurobeachin homolog (2531 aa).

3 stretches are compositionally biased toward acidic residues: residues 1-10, 26-35, and 62-74; these read MDISETEYND, EDEVNDEESN, and EPSD…EESE. Disordered stretches follow at residues 1–101, 1363–1398, 1420–1440, and 1642–1670; these read MDIS…SPPP, NDGD…DNGG, EELK…MPPQ, and RFVP…EISE. Over residues 1363-1379 the composition is skewed to basic and acidic residues; sequence NDGDHASIKNGSDHSEN. Residues 1427 to 1440 are compositionally biased toward polar residues; that stretch reads QSNGRRPSTLMPPQ. Basic and acidic residues predominate over residues 1650-1670; sequence SRHEEANLPEGEKNEEPEISE. Residues 1714–1822 form the BEACH-type PH domain; that stretch reads PSSQSACFST…TVRKVVYQLP (109 aa). In terms of domain architecture, BEACH spans 1841-2130; sequence MTPRQLFKHS…QLLAEAHPPR (290 aa). WD repeat units lie at residues 2289–2332, 2350–2389, 2429–2468, and 2471–2510; these read GHGD…GFIA, GHEA…LRRI, LSEE…KLYT, and PLNS…WHYE.

Belongs to the WD repeat neurobeachin family. In terms of assembly, interacts with RII subunit of PKA.

It localises to the cytoplasm. Its subcellular location is the membrane. The protein resides in the nucleus. Functionally, binds to type II regulatory subunits of protein kinase A and anchors/targets them to the membrane. May anchor the kinase to cytoskeletal and/or organelle-associated proteins. Regulates endosomal traffic in polarized epithelial cells such as the vulval precursor cells and intestinal cells. Thought to act as a negative regulator of lin-12 activity in vulval precursor cells. May have a role in the internalization process from basolateral surface of polarized epithelial cells. The polypeptide is Putative neurobeachin homolog (Caenorhabditis briggsae).